Reading from the N-terminus, the 332-residue chain is Fructose-1,6-bisphosphatase class 1 (332 aa).

Mg(2+)-binding residues include Glu89, Asp110, Leu112, and Asp113. Residues 113 to 116, Asn206, Tyr239, 257 to 259, and Lys269 contribute to the substrate site; these read DGSS and YLY. Glu275 contributes to the Mg(2+) binding site.

This sequence belongs to the FBPase class 1 family. Homotetramer. Mg(2+) is required as a cofactor.

It is found in the cytoplasm. The catalysed reaction is beta-D-fructose 1,6-bisphosphate + H2O = beta-D-fructose 6-phosphate + phosphate. The protein operates within carbohydrate biosynthesis; gluconeogenesis. The chain is Fructose-1,6-bisphosphatase class 1 from Enterobacter sp. (strain 638).